Consider the following 200-residue polypeptide: MLIQQLGRQDYVSVWQKMQDFTRQRGGAEDDQLWLVEHYPVYTQGQAGKAEHILNTGNIPVIQIDRGGQITYHGLGQAVIYPLLSLKAANIGIRRFVSLVEETTIALLQDYAVAAHARADAPGVYVADGRKIASLGFKVSRGCSYHGIAINVAMDLSPFLGINPCGLSGMKMAQLSEFVPEIDVDSVHKKWAELFSARWR.

The BPL/LPL catalytic domain occupies 27 to 200 (GAEDDQLWLV…WAELFSARWR (174 aa)). Substrate is bound by residues 66 to 73 (RGGQITYH), 134 to 136 (SLG), and 147 to 149 (GIA). Residue C165 is the Acyl-thioester intermediate of the active site.

Belongs to the LipB family.

It localises to the cytoplasm. It carries out the reaction octanoyl-[ACP] + L-lysyl-[protein] = N(6)-octanoyl-L-lysyl-[protein] + holo-[ACP] + H(+). It participates in protein modification; protein lipoylation via endogenous pathway; protein N(6)-(lipoyl)lysine from octanoyl-[acyl-carrier-protein]: step 1/2. Functionally, catalyzes the transfer of endogenously produced octanoic acid from octanoyl-acyl-carrier-protein onto the lipoyl domains of lipoate-dependent enzymes. Lipoyl-ACP can also act as a substrate although octanoyl-ACP is likely to be the physiological substrate. This Dichelobacter nodosus (strain VCS1703A) protein is Octanoyltransferase.